The chain runs to 180 residues: Secreted RxLR effector protein 19 (180 aa).

Positions 1–19 (MKLLLRALATFVLLNGVDS) are cleaved as a signal peptide. The region spanning 25–171 (FQKCNVTGGP…IFALGALWGP (147 aa)) is the Jacalin-type lectin domain. The RxLR-dEER motif lies at 52–77 (RALRLCGVDFVDGIGVTIWDLSVEEN).

This sequence belongs to the RxLR effector family.

Its subcellular location is the secreted. It localises to the host cytoplasm. It is found in the host nucleus. Its function is as follows. Effector that partially suppresses the tobacco programmed cell death induced by cell death-inducing proteins. The sequence is that of Secreted RxLR effector protein 19 from Plasmopara viticola (Downy mildew of grapevine).